A 162-amino-acid chain; its full sequence is Cytochrome c-type biogenesis protein CcmE (162 aa).

Over 1–13 (MSFWPQSRKARRR) the chain is Cytoplasmic. Residues 14 to 34 (LTILLAIAPVLALAVGLALYG) form a helical; Signal-anchor for type II membrane protein membrane-spanning segment. Topologically, residues 35 to 162 (LRDSISLFYT…DAPAYGSQKP (128 aa)) are periplasmic. 2 residues coordinate heme: H128 and Y132. The segment covering 140-151 (ALKEQGEWRGEG) has biased composition (basic and acidic residues). Residues 140–162 (ALKEQGEWRGEGADAPAYGSQKP) form a disordered region.

This sequence belongs to the CcmE/CycJ family.

The protein localises to the cell inner membrane. Its function is as follows. Heme chaperone required for the biogenesis of c-type cytochromes. Transiently binds heme delivered by CcmC and transfers the heme to apo-cytochromes in a process facilitated by CcmF and CcmH. The protein is Cytochrome c-type biogenesis protein CcmE of Caulobacter vibrioides (strain ATCC 19089 / CIP 103742 / CB 15) (Caulobacter crescentus).